A 258-amino-acid chain; its full sequence is Imidazole glycerol phosphate synthase subunit HisF (258 aa).

Active-site residues include D11 and D130.

The protein belongs to the HisA/HisF family. In terms of assembly, heterodimer of HisH and HisF.

It is found in the cytoplasm. The enzyme catalyses 5-[(5-phospho-1-deoxy-D-ribulos-1-ylimino)methylamino]-1-(5-phospho-beta-D-ribosyl)imidazole-4-carboxamide + L-glutamine = D-erythro-1-(imidazol-4-yl)glycerol 3-phosphate + 5-amino-1-(5-phospho-beta-D-ribosyl)imidazole-4-carboxamide + L-glutamate + H(+). The protein operates within amino-acid biosynthesis; L-histidine biosynthesis; L-histidine from 5-phospho-alpha-D-ribose 1-diphosphate: step 5/9. Its function is as follows. IGPS catalyzes the conversion of PRFAR and glutamine to IGP, AICAR and glutamate. The HisF subunit catalyzes the cyclization activity that produces IGP and AICAR from PRFAR using the ammonia provided by the HisH subunit. The protein is Imidazole glycerol phosphate synthase subunit HisF of Yersinia pseudotuberculosis serotype IB (strain PB1/+).